The chain runs to 506 residues: 2-isopropylmalate synthase (506 aa).

The Pyruvate carboxyltransferase domain occupies 4–266; the sequence is ILFMDTTLRD…EPSITLKEIK (263 aa). Mn(2+)-binding residues include D13, H201, H203, and N237. The segment at 390 to 506 is regulatory domain; it reads NITQLQVHFV…KLKSFIQLVK (117 aa).

It belongs to the alpha-IPM synthase/homocitrate synthase family. LeuA type 1 subfamily. In terms of assembly, homodimer. Mn(2+) serves as cofactor.

It localises to the cytoplasm. The enzyme catalyses 3-methyl-2-oxobutanoate + acetyl-CoA + H2O = (2S)-2-isopropylmalate + CoA + H(+). Its pathway is amino-acid biosynthesis; L-leucine biosynthesis; L-leucine from 3-methyl-2-oxobutanoate: step 1/4. Its function is as follows. Catalyzes the condensation of the acetyl group of acetyl-CoA with 3-methyl-2-oxobutanoate (2-ketoisovalerate) to form 3-carboxy-3-hydroxy-4-methylpentanoate (2-isopropylmalate). This is 2-isopropylmalate synthase from Bacillus thuringiensis subsp. konkukian (strain 97-27).